Reading from the N-terminus, the 352-residue chain is Holliday junction branch migration complex subunit RuvB (352 aa).

A large ATPase domain (RuvB-L) region spans residues 13–201 (FSLRKKELRL…FGISQKIEFY (189 aa)). ATP is bound by residues Arg-41, Gly-82, Lys-85, Thr-86, Thr-87, 148–150 (EDF), Arg-191, Tyr-201, and Arg-238. Thr-86 is a binding site for Mg(2+). The segment at 202-273 (TCDELKQIID…LIKKALNSYQ (72 aa)) is small ATPAse domain (RuvB-S). Residues 276 to 352 (EKGLDYVDRQ…KYIDSKNDNF (77 aa)) form a head domain (RuvB-H) region. Residues Arg-330 and Arg-335 each coordinate DNA.

This sequence belongs to the RuvB family. As to quaternary structure, homohexamer. Forms an RuvA(8)-RuvB(12)-Holliday junction (HJ) complex. HJ DNA is sandwiched between 2 RuvA tetramers; dsDNA enters through RuvA and exits via RuvB. An RuvB hexamer assembles on each DNA strand where it exits the tetramer. Each RuvB hexamer is contacted by two RuvA subunits (via domain III) on 2 adjacent RuvB subunits; this complex drives branch migration. In the full resolvosome a probable DNA-RuvA(4)-RuvB(12)-RuvC(2) complex forms which resolves the HJ.

It localises to the cytoplasm. It carries out the reaction ATP + H2O = ADP + phosphate + H(+). The RuvA-RuvB-RuvC complex processes Holliday junction (HJ) DNA during genetic recombination and DNA repair, while the RuvA-RuvB complex plays an important role in the rescue of blocked DNA replication forks via replication fork reversal (RFR). RuvA specifically binds to HJ cruciform DNA, conferring on it an open structure. The RuvB hexamer acts as an ATP-dependent pump, pulling dsDNA into and through the RuvAB complex. RuvB forms 2 homohexamers on either side of HJ DNA bound by 1 or 2 RuvA tetramers; 4 subunits per hexamer contact DNA at a time. Coordinated motions by a converter formed by DNA-disengaged RuvB subunits stimulates ATP hydrolysis and nucleotide exchange. Immobilization of the converter enables RuvB to convert the ATP-contained energy into a lever motion, pulling 2 nucleotides of DNA out of the RuvA tetramer per ATP hydrolyzed, thus driving DNA branch migration. The RuvB motors rotate together with the DNA substrate, which together with the progressing nucleotide cycle form the mechanistic basis for DNA recombination by continuous HJ branch migration. Branch migration allows RuvC to scan DNA until it finds its consensus sequence, where it cleaves and resolves cruciform DNA. The polypeptide is Holliday junction branch migration complex subunit RuvB (Prochlorococcus marinus (strain MIT 9312)).